A 288-amino-acid polypeptide reads, in one-letter code: B3 domain-containing protein At2g35310 (288 aa).

DNA-binding regions (TF-B3) lie at residues 19–114 (FFKV…FMQD) and 196–288 (AEFS…VSKP).

The protein localises to the nucleus. The sequence is that of B3 domain-containing protein At2g35310 from Arabidopsis thaliana (Mouse-ear cress).